A 434-amino-acid polypeptide reads, in one-letter code: Alpha-enolase (434 aa).

Serine 2 is subject to N-acetylserine. Residue serine 40 coordinates Mg(2+). Residue tyrosine 44 is modified to Phosphotyrosine. Lysine 60 carries the N6-acetyllysine; alternate modification. Residue lysine 60 is modified to N6-succinyllysine; alternate. At lysine 71 the chain carries N6-acetyllysine. Lysine 89 carries the N6-acetyllysine; alternate modification. An N6-succinyllysine; alternate modification is found at lysine 89. 2 positions are modified to N6-acetyllysine: lysine 92 and lysine 126. Histidine 158 and glutamate 167 together coordinate substrate. N6-acetyllysine is present on residues lysine 193 and lysine 199. The residue at position 202 (lysine 202) is an N6-acetyllysine; alternate. Lysine 202 participates in a covalent cross-link: Glycyl lysine isopeptide (Lys-Gly) (interchain with G-Cter in SUMO2); alternate. Catalysis depends on glutamate 210, which acts as the Proton donor. An N6-acetyllysine; alternate mark is found at lysine 228 and lysine 233. Lysine 228 carries the post-translational modification N6-succinyllysine; alternate. At lysine 228 the chain carries N6-(2-hydroxyisobutyryl)lysine; alternate. An N6-malonyllysine; alternate modification is found at lysine 233. Residue aspartate 245 coordinates Mg(2+). Position 254 is a phosphoserine (serine 254). Lysine 256 bears the N6-acetyllysine mark. Serine 263 carries the post-translational modification Phosphoserine. Lysine 281 is subject to N6-acetyllysine; alternate. Lysine 281 carries the N6-(2-hydroxyisobutyryl)lysine; alternate modification. At tyrosine 287 the chain carries Phosphotyrosine. Position 291 is a phosphoserine (serine 291). Residues glutamate 293 and aspartate 318 each contribute to the Mg(2+) site. Glutamate 293 and aspartate 318 together coordinate substrate. Lysine 335 and lysine 343 each carry N6-acetyllysine. The active-site Proton acceptor is lysine 343. Residues serine 370–serine 373 and lysine 394 each bind substrate. Residues alanine 405–lysine 434 form a required for interaction with PLG region. The residue at position 406 (lysine 406) is an N6-acetyllysine. Lysine 420 is modified (N6-acetyllysine; alternate). Lysine 420 carries the post-translational modification N6-succinyllysine; alternate. The residue at position 420 (lysine 420) is an N6-malonyllysine; alternate.

It belongs to the enolase family. In terms of assembly, mammalian enolase is composed of 3 isozyme subunits, alpha, beta and gamma, which can form homodimers or heterodimers which are cell-type and development-specific. ENO1 interacts with PLG in the neuronal plasma membrane and promotes its activation. The C-terminal lysine is required for this binding. In vitro, interacts with several glycolytic enzymes including PKM, PGM, CKM and aldolase. Also binds troponin, in vitro. Interacts with ENO4 and PGAM2. Interacts with CMTM6. The cofactor is Mg(2+). In terms of processing, ISGylated. Post-translationally, lysine 2-hydroxyisobutyrylation (Khib) by p300/EP300 activates the phosphopyruvate hydratase activity. Testis. Found in the principal piece of sperm tail (at protein level). The alpha/alpha homodimer is expressed in embryo and in most adult tissues. The alpha/beta heterodimer and the beta/beta homodimer are found in striated muscle, and the alpha/gamma heterodimer and the gamma/gamma homodimer in neurons. In striated muscle, expression of ENO1 appears to be independent of fiber type.

The protein resides in the cytoplasm. It localises to the cell membrane. It carries out the reaction (2R)-2-phosphoglycerate = phosphoenolpyruvate + H2O. The protein operates within carbohydrate degradation; glycolysis; pyruvate from D-glyceraldehyde 3-phosphate: step 4/5. Its function is as follows. Glycolytic enzyme the catalyzes the conversion of 2-phosphoglycerate to phosphoenolpyruvate. In addition to glycolysis, involved in various processes such as growth control, hypoxia tolerance and allergic responses. May also function in the intravascular and pericellular fibrinolytic system due to its ability to serve as a receptor and activator of plasminogen on the cell surface of several cell-types such as leukocytes and neurons. Stimulates immunoglobulin production. The chain is Alpha-enolase (Eno1) from Mus musculus (Mouse).